The sequence spans 171 residues: Ribosome maturation factor RimM (171 aa).

The PRC barrel domain maps to 96 to 169 (EGEFFIADMI…KMIIDPIKGM (74 aa)).

This sequence belongs to the RimM family. Binds ribosomal protein uS19.

It localises to the cytoplasm. Its function is as follows. An accessory protein needed during the final step in the assembly of 30S ribosomal subunit, possibly for assembly of the head region. Essential for efficient processing of 16S rRNA. May be needed both before and after RbfA during the maturation of 16S rRNA. It has affinity for free ribosomal 30S subunits but not for 70S ribosomes. The polypeptide is Ribosome maturation factor RimM (Clostridioides difficile (strain 630) (Peptoclostridium difficile)).